The following is a 120-amino-acid chain: Ribonuclease P protein component (120 aa).

This sequence belongs to the RnpA family. Consists of a catalytic RNA component (M1 or rnpB) and a protein subunit.

It carries out the reaction Endonucleolytic cleavage of RNA, removing 5'-extranucleotides from tRNA precursor.. Functionally, RNaseP catalyzes the removal of the 5'-leader sequence from pre-tRNA to produce the mature 5'-terminus. It can also cleave other RNA substrates such as 4.5S RNA. The protein component plays an auxiliary but essential role in vivo by binding to the 5'-leader sequence and broadening the substrate specificity of the ribozyme. This is Ribonuclease P protein component from Dehalococcoides mccartyi (strain ATCC BAA-2266 / KCTC 15142 / 195) (Dehalococcoides ethenogenes (strain 195)).